Consider the following 195-residue polypeptide: MANILVLKSSILGQYSQSNALIDGFLADHQSDTVTVRDLATLNLPVLDGELASGLRGGDNLNERQLAVMAQSDELIAELKGSDLVVIAAPMYNFSIPTQLKNWIDLIARAGVTFRYTETGPVGLVENTRALVISPRGGMHVGSATDLVTPYMRTVLGFIGIKDVDFIYAEGMGMGPDAQAKGIEQAKGQLETLAL.

FMN-binding positions include Ser10, 16-18, and 91-94; these read SQS and MYNF.

It belongs to the azoreductase type 1 family. In terms of assembly, homodimer. The cofactor is FMN.

It catalyses the reaction 2 a quinone + NADH + H(+) = 2 a 1,4-benzosemiquinone + NAD(+). The catalysed reaction is N,N-dimethyl-1,4-phenylenediamine + anthranilate + 2 NAD(+) = 2-(4-dimethylaminophenyl)diazenylbenzoate + 2 NADH + 2 H(+). Functionally, quinone reductase that provides resistance to thiol-specific stress caused by electrophilic quinones. Also exhibits azoreductase activity. Catalyzes the reductive cleavage of the azo bond in aromatic azo compounds to the corresponding amines. The chain is FMN-dependent NADH:quinone oxidoreductase from Aeromonas salmonicida (strain A449).